An 82-amino-acid polypeptide reads, in one-letter code: Small ribosomal subunit protein bS16 (82 aa).

This sequence belongs to the bacterial ribosomal protein bS16 family.

The protein is Small ribosomal subunit protein bS16 of Tolumonas auensis (strain DSM 9187 / NBRC 110442 / TA 4).